Reading from the N-terminus, the 40-residue chain is Putative protein FAM86JP (40 aa).

The disordered stretch occupies residues 1–40 (MPGAFSQNSSKRRAVLPRSHRVAGRGPAEAGCLPGAPAGS). Over residues 10–23 (SKRRAVLPRSHRVA) the composition is skewed to basic residues.

The polypeptide is Putative protein FAM86JP (Homo sapiens (Human)).